The sequence spans 622 residues: Apical membrane antigen 1 (622 aa).

The signal sequence occupies residues 1–24 (MRKLYCVLLLSAFEFTYMINFGRG). At 25 to 546 (QNYWEHPYQN…EHKPTYDNMK (522 aa)) the chain is on the extracellular side. Disulfide bonds link Cys-149–Cys-302, Cys-217–Cys-247, Cys-263–Cys-275, Cys-320–Cys-418, and Cys-337–Cys-409. N-linked (GlcNAc...) asparagine glycans are attached at residues Asn-286, Asn-371, Asn-421, Asn-422, and Asn-499. 3 disulfides stabilise this stretch: Cys-443/Cys-502, Cys-490/Cys-507, and Cys-492/Cys-509. A helical membrane pass occupies residues 547-567 (IIIASSAAVAVLATILMVYLY). Over 568-622 (KRKGNAEKYDKMDEPQDYGKSTSRNDEMLDPEASFWGEEKRASHTTPVLMEKPYY) the chain is Cytoplasmic. The tract at residues 577-607 (DKMDEPQDYGKSTSRNDEMLDPEASFWGEEK) is disordered.

It belongs to the apicomplexan parasites AMA1 family.

It is found in the membrane. In terms of biological role, involved in parasite invasion of erythrocytes. The protein is Apical membrane antigen 1 (AMA-1) of Plasmodium falciparum (isolate thtn / Thailand).